We begin with the raw amino-acid sequence, 457 residues long: Peptidyl-prolyl cis-trans isomerase FKBP5 (457 aa).

Position 1 is an N-acetylmethionine (methionine 1). Over residues 1-11 the composition is skewed to basic and acidic residues; it reads MTTDEGAKSSR. Positions 1 to 28 are disordered; it reads MTTDEGAKSSRENPAATVAEQGEDVTSK. The residue at position 28 (lysine 28) is an N6-acetyllysine. PPIase FKBP-type domains are found at residues 50 to 138 and 165 to 251; these read GDKV…LNFK and GARV…KSFE. TPR repeat units follow at residues 268–301, 317–350, and 351–384; these read AAIVKEEGTVYFKGGKYVQAVIQYGKIVSWLEME, LAAFLNLAMCYLKLREYAKAVECCDKALGLDSAN, and EKGLYRRGEAQLLMNEFESAKGDFEKVLEVNPQN. Positions 424 to 457 are disordered; that stretch reads EANKAVSKKTSEGVTNEKLTVSHAVEEEKPEGHV. Residue serine 445 is modified to Phosphoserine. Residues 447-457 are compositionally biased toward basic and acidic residues; that stretch reads AVEEEKPEGHV.

Part of a heteromultimeric cytoplasmic complex with HSP90AA1, HSPA1A/HSPA1B and steroid receptors. Upon ligand binding dissociates from the complex and FKBP4 takes its place. Interacts with functionally mature heterooligomeric progesterone receptor complexes along with HSP90 and TEBP. Interacts with NR3C1. Interacts with Akt/AKT1 and PHLPP1; enhancing dephosphorylation and subsequent activation of Akt/AKT1. Interacts with IFI44L; this interaction modulates the kinase activity of IKBKB and IKBKE. Interacts with IKBKB and IKBKE. Post-translationally, acetylation impairs ability to promote interaction between Akt/AKT1 and PHLPP1. Deacetylation by SIRT7 promotes interaction between Akt/AKT1 and PHLPP1, leading to suppress Akt/AKT1 activation. Ubiquitinated, leading to degradation in a proteasome-dependent manner. Deubiquitinated by USP49, leading to stabilization.

It is found in the cytoplasm. It localises to the nucleus. The enzyme catalyses [protein]-peptidylproline (omega=180) = [protein]-peptidylproline (omega=0). With respect to regulation, inhibited by both FK506 and rapamycin. Functionally, immunophilin protein with PPIase and co-chaperone activities. Component of unligated steroid receptors heterocomplexes through interaction with heat-shock protein 90 (HSP90). Plays a role in the intracellular trafficking of heterooligomeric forms of steroid hormone receptors maintaining the complex into the cytoplasm when unliganded. Acts as a regulator of Akt/AKT1 activity by promoting the interaction between Akt/AKT1 and PHLPP1, thereby enhancing dephosphorylation and subsequent activation of Akt/AKT1. Interacts with IKBKE and IKBKB which facilitates IKK complex assembly leading to increased IKBKE and IKBKB kinase activity, NF-kappaB activation, and IFN production. In Saguinus oedipus (Cotton-top tamarin), this protein is Peptidyl-prolyl cis-trans isomerase FKBP5 (FKBP5).